Here is a 335-residue protein sequence, read N- to C-terminus: Biotin synthase (335 aa).

One can recognise a Radical SAM core domain in the interval 51 to 278 (NTVQLSSLLS…LAKVRLSAGR (228 aa)). C66, C70, and C73 together coordinate [4Fe-4S] cluster. Residues C110, C141, C201, and R273 each coordinate [2Fe-2S] cluster.

It belongs to the radical SAM superfamily. Biotin synthase family. In terms of assembly, homodimer. Requires [4Fe-4S] cluster as cofactor. [2Fe-2S] cluster serves as cofactor.

The enzyme catalyses (4R,5S)-dethiobiotin + (sulfur carrier)-SH + 2 reduced [2Fe-2S]-[ferredoxin] + 2 S-adenosyl-L-methionine = (sulfur carrier)-H + biotin + 2 5'-deoxyadenosine + 2 L-methionine + 2 oxidized [2Fe-2S]-[ferredoxin]. Its pathway is cofactor biosynthesis; biotin biosynthesis; biotin from 7,8-diaminononanoate: step 2/2. Its function is as follows. Catalyzes the conversion of dethiobiotin (DTB) to biotin by the insertion of a sulfur atom into dethiobiotin via a radical-based mechanism. This is Biotin synthase from Bordetella bronchiseptica (strain ATCC BAA-588 / NCTC 13252 / RB50) (Alcaligenes bronchisepticus).